We begin with the raw amino-acid sequence, 395 residues long: MAKETFDRSKPHVNIGTIGHVDHGKTTLTAAITKVLSKRGLAQVRDFGSIDNAPEERERGITINTSHVEYETSKRHYAHVDCPGHADYVKNMITGAAQMDGAILVVAATDGPMPQTREHILLASQVGVPNLVVFLNKVDAVDDPELVDLVEEEVRDLLKAYKFDGDNIPVIRGSALGALNGEPEWEAKVEELMDNVDEYIPLPQRLIDRDFLMPVEDTMSITGRGTVATGRIERGVINVGDPVQIIGMGAQNLNSTVTGVEMFRKLLDRGEAGDNVGLLLRGIDKEKIHRGMVICKPKSVTPHRKFKAEVYVLSKEEGGRHTPFFNKYRPQFYFRTTDVTGEVKLPAGVEMVMPGDNIALEVELINEIAMEKGLRFAIREGGRTVGAGQIIEILD.

The 195-residue stretch at 10 to 204 (KPHVNIGTIG…NVDEYIPLPQ (195 aa)) folds into the tr-type G domain. Residues 19 to 26 (GHVDHGKT) are G1. 19-26 (GHVDHGKT) provides a ligand contact to GTP. T26 is a Mg(2+) binding site. A G2 region spans residues 60–64 (GITIN). A G3 region spans residues 81–84 (DCPG). GTP contacts are provided by residues 81 to 85 (DCPGH) and 136 to 139 (NKVD). The G4 stretch occupies residues 136-139 (NKVD). Residues 174–176 (SAL) are G5.

It belongs to the TRAFAC class translation factor GTPase superfamily. Classic translation factor GTPase family. EF-Tu/EF-1A subfamily. Monomer.

Its subcellular location is the cytoplasm. It catalyses the reaction GTP + H2O = GDP + phosphate + H(+). Its function is as follows. GTP hydrolase that promotes the GTP-dependent binding of aminoacyl-tRNA to the A-site of ribosomes during protein biosynthesis. This chain is Elongation factor Tu, found in Amoebophilus asiaticus (strain 5a2).